A 288-amino-acid chain; its full sequence is MHFLSPAKLNLFLQILGRREDDFHEIVTRYQAIAFGDQLSLSISSRDSLQVINACHLETPSNSIWKSVALFRRYTGITTPVSWRVVKQIPVGAGLAGGSSNAATALFALNQIFKTGLSDEEMRSLAEQLGVDTPFFFSTGAALGVARGEKIIALEESVSDRYVLYFSSEGVLTSRAFAAVQPSDCSSRKNLEYTQNDLEKPVFRLRLDLKEKKHWLESLWAELPVYIGLTGSGATLFVRYPEILEKDLSYAAQIQRAVTLSGGLLTSPIRRDPTAWYSIYSESALAAT.

Residue K8 is part of the active site. 90–100 (PVGAGLAGGSS) serves as a coordination point for ATP. The active site involves D132.

Belongs to the GHMP kinase family. IspE subfamily.

It carries out the reaction 4-CDP-2-C-methyl-D-erythritol + ATP = 4-CDP-2-C-methyl-D-erythritol 2-phosphate + ADP + H(+). Its pathway is isoprenoid biosynthesis; isopentenyl diphosphate biosynthesis via DXP pathway; isopentenyl diphosphate from 1-deoxy-D-xylulose 5-phosphate: step 3/6. Its function is as follows. Catalyzes the phosphorylation of the position 2 hydroxy group of 4-diphosphocytidyl-2C-methyl-D-erythritol. This chain is 4-diphosphocytidyl-2-C-methyl-D-erythritol kinase, found in Chlamydia trachomatis serovar A (strain ATCC VR-571B / DSM 19440 / HAR-13).